We begin with the raw amino-acid sequence, 159 residues long: 2-C-methyl-D-erythritol 2,4-cyclodiphosphate synthase (159 aa).

A divalent metal cation contacts are provided by aspartate 8 and histidine 10. 4-CDP-2-C-methyl-D-erythritol 2-phosphate contacts are provided by residues aspartate 8–histidine 10 and histidine 34–serine 35. Residue histidine 42 participates in a divalent metal cation binding. Residues aspartate 56–glycine 58, alanine 100–alanine 106, threonine 132–glutamate 135, phenylalanine 139, and arginine 142 contribute to the 4-CDP-2-C-methyl-D-erythritol 2-phosphate site.

The protein belongs to the IspF family. In terms of assembly, homotrimer. A divalent metal cation is required as a cofactor.

It catalyses the reaction 4-CDP-2-C-methyl-D-erythritol 2-phosphate = 2-C-methyl-D-erythritol 2,4-cyclic diphosphate + CMP. It participates in isoprenoid biosynthesis; isopentenyl diphosphate biosynthesis via DXP pathway; isopentenyl diphosphate from 1-deoxy-D-xylulose 5-phosphate: step 4/6. Its function is as follows. Involved in the biosynthesis of isopentenyl diphosphate (IPP) and dimethylallyl diphosphate (DMAPP), two major building blocks of isoprenoid compounds. Catalyzes the conversion of 4-diphosphocytidyl-2-C-methyl-D-erythritol 2-phosphate (CDP-ME2P) to 2-C-methyl-D-erythritol 2,4-cyclodiphosphate (ME-CPP) with a corresponding release of cytidine 5-monophosphate (CMP). This Marinobacter nauticus (strain ATCC 700491 / DSM 11845 / VT8) (Marinobacter aquaeolei) protein is 2-C-methyl-D-erythritol 2,4-cyclodiphosphate synthase.